The chain runs to 195 residues: Large ribosomal subunit protein uL11m (195 aa).

Belongs to the universal ribosomal protein uL11 family. In terms of assembly, component of the mitochondrial ribosome large subunit (39S) which comprises a 16S rRNA and about 50 distinct proteins.

It localises to the mitochondrion. This chain is Large ribosomal subunit protein uL11m (mrpl-11), found in Caenorhabditis elegans.